We begin with the raw amino-acid sequence, 309 residues long: ADP-L-glycero-D-manno-heptose-6-epimerase (309 aa).

Residues 10–11 (MI), 31–32 (DN), Lys38, Lys53, 75–79 (EGACS), and Asn92 contribute to the NADP(+) site. Tyr139 (proton acceptor) is an active-site residue. Lys143 contacts NADP(+). Asn168 contacts substrate. Residues Val169 and Lys177 each contribute to the NADP(+) site. Lys177 serves as the catalytic Proton acceptor. Substrate contacts are provided by residues Ser179, His186, 200–203 (FDGS), Arg208, and Tyr271.

It belongs to the NAD(P)-dependent epimerase/dehydratase family. HldD subfamily. As to quaternary structure, homopentamer. Requires NADP(+) as cofactor.

It catalyses the reaction ADP-D-glycero-beta-D-manno-heptose = ADP-L-glycero-beta-D-manno-heptose. It participates in nucleotide-sugar biosynthesis; ADP-L-glycero-beta-D-manno-heptose biosynthesis; ADP-L-glycero-beta-D-manno-heptose from D-glycero-beta-D-manno-heptose 7-phosphate: step 4/4. Functionally, catalyzes the interconversion between ADP-D-glycero-beta-D-manno-heptose and ADP-L-glycero-beta-D-manno-heptose via an epimerization at carbon 6 of the heptose. This Serratia proteamaculans (strain 568) protein is ADP-L-glycero-D-manno-heptose-6-epimerase.